Consider the following 314-residue polypeptide: Solute carrier family 25 member 44 (314 aa).

Solcar repeat units lie at residues 18 to 100, 107 to 210, and 220 to 302; these read KKFY…TRKF, SNTV…YAEQ, and PHIV…LKKL. The next 6 helical transmembrane spans lie at 20 to 42, 71 to 90, 113 to 133, 185 to 201, 222 to 239, and 278 to 296; these read FYVF…TLIR, AGLY…GQCY, LVAG…IDVV, GYVA…AVWW, IVFQ…ASIL, and LSAR…VVGY.

It belongs to the mitochondrial carrier (TC 2.A.29) family. Highly expressed in brown adipose tissues compared with other metabolic organs.

It localises to the mitochondrion membrane. It catalyses the reaction L-valine(in) = L-valine(out). It carries out the reaction L-leucine(in) = L-leucine(out). Functionally, mitochondrial solute transporter which transports branched-chain amino acid (BCAA; valine, leucine and isoleucine) into mitochondria in brown adipose tissue (BAT). BAT is involved in BCAA catabolism and actively utilizes BCAA in the mitochondria for thermogenesis. This Mus musculus (Mouse) protein is Solute carrier family 25 member 44.